We begin with the raw amino-acid sequence, 259 residues long: Hydroxyacylglutathione hydrolase (259 aa).

Zn(2+) is bound by residues histidine 56, histidine 58, aspartate 60, histidine 61, histidine 112, aspartate 133, and histidine 171.

Belongs to the metallo-beta-lactamase superfamily. Glyoxalase II family. Monomer. Zn(2+) serves as cofactor.

The catalysed reaction is an S-(2-hydroxyacyl)glutathione + H2O = a 2-hydroxy carboxylate + glutathione + H(+). It functions in the pathway secondary metabolite metabolism; methylglyoxal degradation; (R)-lactate from methylglyoxal: step 2/2. In terms of biological role, thiolesterase that catalyzes the hydrolysis of S-D-lactoyl-glutathione to form glutathione and D-lactic acid. The sequence is that of Hydroxyacylglutathione hydrolase from Pseudomonas putida (strain ATCC 700007 / DSM 6899 / JCM 31910 / BCRC 17059 / LMG 24140 / F1).